The chain runs to 73 residues: Gas vesicle protein A (73 aa).

The protein belongs to the gas vesicle GvpA family. As to quaternary structure, the gas vesicle shell is 2 nm thick and consists of a single layer of this protein. It forms helical ribs nearly perpendicular to the long axis of the vesicle.

It localises to the gas vesicle shell. In terms of biological role, gas vesicles are hollow, gas filled proteinaceous nanostructures found in some microorganisms. During planktonic growth they allow positioning of the organism at a favorable depth for light or nutrient acquisition. GvpA forms the protein shell. The protein is Gas vesicle protein A of Nostoc punctiforme (strain ATCC 29133 / PCC 73102).